The following is a 563-amino-acid chain: Arginine--tRNA ligase (563 aa).

The 'HIGH' region signature appears at 121–131 (PNIAKPFSIGH).

Belongs to the class-I aminoacyl-tRNA synthetase family. Monomer.

Its subcellular location is the cytoplasm. It carries out the reaction tRNA(Arg) + L-arginine + ATP = L-arginyl-tRNA(Arg) + AMP + diphosphate. The protein is Arginine--tRNA ligase of Streptococcus pyogenes serotype M1.